Here is a 431-residue protein sequence, read N- to C-terminus: Glutamate-1-semialdehyde 2,1-aminomutase (431 aa).

The residue at position 269 (Lys269) is an N6-(pyridoxal phosphate)lysine.

This sequence belongs to the class-III pyridoxal-phosphate-dependent aminotransferase family. HemL subfamily. Homodimer. Pyridoxal 5'-phosphate is required as a cofactor.

It localises to the cytoplasm. The catalysed reaction is (S)-4-amino-5-oxopentanoate = 5-aminolevulinate. It participates in porphyrin-containing compound metabolism; protoporphyrin-IX biosynthesis; 5-aminolevulinate from L-glutamyl-tRNA(Glu): step 2/2. In Francisella tularensis subsp. mediasiatica (strain FSC147), this protein is Glutamate-1-semialdehyde 2,1-aminomutase.